Here is a 197-residue protein sequence, read N- to C-terminus: Neurturin (197 aa).

Residues 1 to 19 form the signal peptide; that stretch reads MQRWKAAALASVLCSSVLS. The propeptide occupies 20–95; it reads IWMCREGLLL…RAGPRRRRAR (76 aa). A disordered region spans residues 74–93; sequence TPWAGRPPGPRRRAGPRRRR. The span at 82 to 93 shows a compositional bias: basic residues; the sequence is GPRRRAGPRRRR. 3 cysteine pairs are disulfide-bonded: C103/C165, C130/C194, and C134/C196. 4 residues coordinate heparan sulfate group: R149, R158, R160, and Q162.

It belongs to the TGF-beta family. GDNF subfamily. In terms of assembly, homodimer; disulfide-linked. Interacts with GFRA2 coreceptor and RET: forms a 2:2:2 ternary complex composed of NRTN ligand, GFRA2 and RET receptor. Also forms a 4:4:4 tetrameric complex composed of 4 copies of NRTN ligand, GFRA2 and RET receptor, which prevents endocytosis of RET.

The protein localises to the secreted. Its function is as follows. Growth factor that supports the survival of sympathetic neurons in culture. May regulate the development and maintenance of the CNS. Involved in the development of the neural crest. Might control the size of non-neuronal cell population such as haemopoietic cells. Acts by binding to its coreceptor, GFRA2, leading to autophosphorylation and activation of the RET receptor. Heparan sulfate-binding is required for signaling. The sequence is that of Neurturin from Homo sapiens (Human).